Reading from the N-terminus, the 200-residue chain is NAD(P)H dehydrogenase (quinone) (200 aa).

The region spanning 4–190 (VLVLYYSTYG…EGARFQGRHV (187 aa)) is the Flavodoxin-like domain. FMN is bound by residues 10–15 (STYGHV) and 78–80 (TRY). Tyr12 contacts NAD(+). Trp98 is a binding site for substrate. FMN-binding positions include 113–119 (STASQHG) and His134.

Belongs to the WrbA family. FMN serves as cofactor.

It catalyses the reaction a quinone + NADH + H(+) = a quinol + NAD(+). The catalysed reaction is a quinone + NADPH + H(+) = a quinol + NADP(+). The protein is NAD(P)H dehydrogenase (quinone) of Methylobacterium radiotolerans (strain ATCC 27329 / DSM 1819 / JCM 2831 / NBRC 15690 / NCIMB 10815 / 0-1).